The following is a 299-amino-acid chain: MSGFVEKPEPIQVPGLVHLHTGKVRELYRNEAGDLVMVASDRISAYDWVLPTEIPDKGRVLTQLSLWWFDQLADLAPNHVLSTELPPGAPADWEGRALVCKSLRMVPVECVARGYLTGSGLAEYDETRTVCGLALPEGLVDGSELPAPIFTPATKAEVGEHDENVSYEEVARQVGADTAAALRQATLAVYSRARDIARERGIVLADTKFEFGFDGDDLVLADEVLTPDSSRFWPADRWQPGRAQPSYDKQFVRDWLTSAESGWDRKSEQPPPPLPQQVVDATRAKYVEAYELLTGQSWS.

Belongs to the SAICAR synthetase family.

The catalysed reaction is 5-amino-1-(5-phospho-D-ribosyl)imidazole-4-carboxylate + L-aspartate + ATP = (2S)-2-[5-amino-1-(5-phospho-beta-D-ribosyl)imidazole-4-carboxamido]succinate + ADP + phosphate + 2 H(+). Its pathway is purine metabolism; IMP biosynthesis via de novo pathway; 5-amino-1-(5-phospho-D-ribosyl)imidazole-4-carboxamide from 5-amino-1-(5-phospho-D-ribosyl)imidazole-4-carboxylate: step 1/2. In Streptomyces coelicolor (strain ATCC BAA-471 / A3(2) / M145), this protein is Phosphoribosylaminoimidazole-succinocarboxamide synthase.